Here is a 435-residue protein sequence, read N- to C-terminus: Glycine reductase complex component B subunit gamma (435 aa).

Sec-350 is an active-site residue. Position 350 (Sec-350) is a non-standard amino acid, selenocysteine.

This sequence belongs to the GrdB/GrdF/GrdH family. In terms of assembly, heterohexamer of two alpha, two beta and two gamma subunits. Component of the glycine reductase complex, together with components A and C. PB is substrate specific.

It carries out the reaction acetyl phosphate + [thioredoxin]-disulfide + NH4(+) + H2O = [thioredoxin]-dithiol + glycine + phosphate + H(+). Functionally, in the first step of glycine reductase, the substrate is bound to component PB via a Schiff base intermediate. Then the PB-activated substrate is nucleophilically attacked by the selenol anion of component PA to transform it to a carboxymethylated selenoether and the respective amine. By action of component PC, acetyl phosphate is formed, leaving component PA in its oxidized state. Finally component PA becomes reduced by the thioredoxin system to start a new catalytic cycle of reductive deamination. The sequence is that of Glycine reductase complex component B subunit gamma (grdB) from Carboxydothermus hydrogenoformans (strain ATCC BAA-161 / DSM 6008 / Z-2901).